A 415-amino-acid polypeptide reads, in one-letter code: Mannosylglycerate hydrolase (415 aa).

Substrate contacts are provided by residues Tyr23, 27 to 30 (WLWD), Tyr76, Gln98, and Gly158. Residue Asp160 is the Proton donor of the active site. Residues Arg193 and 344 to 345 (YW) contribute to the substrate site. Glu388 functions as the Proton acceptor in the catalytic mechanism.

It belongs to the glycosyl hydrolase 63 family. In terms of assembly, homotetramer in solution.

It catalyses the reaction (2R)-2-O-(alpha-D-mannosyl)-glycerate + H2O = D-mannose + (R)-glycerate. The catalysed reaction is (2R)-2-O-(alpha-D-glucopyranosyl)-glycerate + H2O = (R)-glycerate + D-glucose. Its activity is regulated as follows. Activity is not stimulated by divalent cations and not affected in the presence of EDTA. Functionally, hydrolase that catalyzes the hydrolysis of mannosylglycerate (MG), a solute produced in response to osmotic stress in thermophiles, into mannose and glycerate. Can also hydrolyze glucosylglycerate (GG) to glucose and glycerate, with similar catalytic efficiency. Is highly specific for MG and GG, and cannot use mannosylglyceramide (MGA), glucosylglycerol, mannosylglucosylglycerate (MGG), glucosylglucosylglycerate (GGG) or trehalose as substrates. The protein is Mannosylglycerate hydrolase of Thermus thermophilus (strain ATCC BAA-163 / DSM 7039 / HB27).